The sequence spans 663 residues: Probable rhamnogalacturonate lyase B (663 aa).

Positions 1-19 (MRLRTSLGVASACASVASA) are cleaved as a signal peptide. Residues N27, N110, N143, N239, N285, N495, N535, N569, N597, and N638 are each glycosylated (N-linked (GlcNAc...) asparagine).

Belongs to the polysaccharide lyase 4 family.

The protein localises to the secreted. It catalyses the reaction Endotype eliminative cleavage of L-alpha-rhamnopyranosyl-(1-&gt;4)-alpha-D-galactopyranosyluronic acid bonds of rhamnogalacturonan I domains in ramified hairy regions of pectin leaving L-rhamnopyranose at the reducing end and 4-deoxy-4,5-unsaturated D-galactopyranosyluronic acid at the non-reducing end.. Functionally, pectinolytic enzymes consist of four classes of enzymes: pectin lyase, polygalacturonase, pectin methylesterase and rhamnogalacturonase. Degrades the rhamnogalacturonan I (RG-I) backbone of pectin. The protein is Probable rhamnogalacturonate lyase B (rglB) of Aspergillus flavus (strain ATCC 200026 / FGSC A1120 / IAM 13836 / NRRL 3357 / JCM 12722 / SRRC 167).